The sequence spans 383 residues: Na(+)/H(+) antiporter NhaA (383 aa).

The next 11 membrane-spanning stretches (helical) occupy residues 10-30 (LIGG…NNSP), 56-76 (LMHW…GLEI), 91-111 (IITP…IYLS), 121-141 (GWAI…ALLG), 150-170 (LLVI…IAIF), 174-194 (SLSL…IICN), 206-226 (VVLG…ATLA), 254-274 (PWII…ISFS), 289-308 (IIWG…LAVF), 327-347 (GISL…VLAF), and 355-375 (AIKI…YIVL).

This sequence belongs to the NhaA Na(+)/H(+) (TC 2.A.33) antiporter family.

The protein localises to the cell inner membrane. It catalyses the reaction Na(+)(in) + 2 H(+)(out) = Na(+)(out) + 2 H(+)(in). In terms of biological role, na(+)/H(+) antiporter that extrudes sodium in exchange for external protons. The protein is Na(+)/H(+) antiporter NhaA of Francisella tularensis subsp. tularensis (strain SCHU S4 / Schu 4).